Consider the following 241-residue polypeptide: DnaA regulatory inactivator Hda (241 aa).

This sequence belongs to the DnaA family. HdA subfamily. As to quaternary structure, the active form seems to be an ADP-bound monomer. Forms the RIDA complex (regulatory inactivation of DnaA) of ATP-DnaA, ADP-Hda and the DNA-loaded beta sliding clamp (dnaN).

Functionally, mediates the interaction of DNA replication initiator protein DnaA with DNA polymerase subunit beta sliding clamp (dnaN). Stimulates hydrolysis of ATP-DnaA to ADP-DnaA, rendering DnaA inactive for reinitiation, a process called regulatory inhibition of DnaA or RIDA. The polypeptide is DnaA regulatory inactivator Hda (Salmonella arizonae (strain ATCC BAA-731 / CDC346-86 / RSK2980)).